Reading from the N-terminus, the 231-residue chain is Nitrate reductase [NAD(P)H] (231 aa).

An FAD-binding FR-type domain is found at 1–85 (PQKLGLPVGR…KGPHRHIEYT (85 aa)). Residues 25–28 (RAYT), 42–46 (LIKIY), Phe-47, 59–61 (LMS), and Thr-112 contribute to the FAD site.

The protein belongs to the nitrate reductase family. As to quaternary structure, homodimer. FAD is required as a cofactor. Requires heme as cofactor. It depends on Mo-molybdopterin as a cofactor.

The catalysed reaction is nitrite + NAD(+) + H2O = nitrate + NADH + H(+). It carries out the reaction nitrite + NADP(+) + H2O = nitrate + NADPH + H(+). Nitrate reductase is a key enzyme involved in the first step of nitrate assimilation in plants, fungi and bacteria. The chain is Nitrate reductase [NAD(P)H] (NAR) from Zea mays (Maize).